The following is a 95-amino-acid chain: Protein TusB (95 aa).

It belongs to the DsrH/TusB family. As to quaternary structure, heterohexamer, formed by a dimer of trimers. The hexameric TusBCD complex contains 2 copies each of TusB, TusC and TusD. The TusBCD complex interacts with TusE.

The protein resides in the cytoplasm. Its function is as follows. Part of a sulfur-relay system required for 2-thiolation of 5-methylaminomethyl-2-thiouridine (mnm(5)s(2)U) at tRNA wobble positions. The chain is Protein TusB from Salmonella arizonae (strain ATCC BAA-731 / CDC346-86 / RSK2980).